The sequence spans 949 residues: Translation initiation factor IF-2 (949 aa).

Disordered regions lie at residues 50-206 (FTEK…GAAR) and 220-359 (QNAE…TERK). Composition is skewed to basic and acidic residues over residues 52-84 (EKPK…KVEK) and 104-143 (FKAE…DQGS). Polar residues-rich tracts occupy residues 144-154 (KNRNFNKSQGQ) and 164-180 (GSQQ…SNKP). Low complexity predominate over residues 187 to 206 (NAANRNQNNSQQERQVGAAR). Basic and acidic residues predominate over residues 224–275 (YMRHKETQLREQEEARRLAERAKEEARLAAQKAAEEKAKEAEKAAKTERFEP). Residues 319–336 (KSWNNQNQVRNQRNSNWN) show a composition bias toward low complexity. In terms of domain architecture, tr-type G spans 450 to 619 (ERAPVVTIMG…LLVAEVEELK (170 aa)). Positions 459–466 (GHVDHGKT) are G1. 459-466 (GHVDHGKT) is a binding site for GTP. Residues 484 to 488 (GITQH) form a G2 region. A G3 region spans residues 505–508 (DTPG). Residues 505-509 (DTPGH) and 559-562 (NKID) each bind GTP. Positions 559-562 (NKID) are G4. Residues 595-597 (SAK) form a G5 region.

It belongs to the TRAFAC class translation factor GTPase superfamily. Classic translation factor GTPase family. IF-2 subfamily.

Its subcellular location is the cytoplasm. Its function is as follows. One of the essential components for the initiation of protein synthesis. Protects formylmethionyl-tRNA from spontaneous hydrolysis and promotes its binding to the 30S ribosomal subunits. Also involved in the hydrolysis of GTP during the formation of the 70S ribosomal complex. The protein is Translation initiation factor IF-2 of Streptococcus uberis (strain ATCC BAA-854 / 0140J).